A 628-amino-acid polypeptide reads, in one-letter code: 1,4-alpha-glucan branching enzyme GlgB (628 aa).

The active-site Nucleophile is the Asp304. Glu355 (proton donor) is an active-site residue.

It belongs to the glycosyl hydrolase 13 family. GlgB subfamily. As to quaternary structure, monomer.

It carries out the reaction Transfers a segment of a (1-&gt;4)-alpha-D-glucan chain to a primary hydroxy group in a similar glucan chain.. The protein operates within glycan biosynthesis; glycogen biosynthesis. Functionally, catalyzes the formation of the alpha-1,6-glucosidic linkages in glycogen by scission of a 1,4-alpha-linked oligosaccharide from growing alpha-1,4-glucan chains and the subsequent attachment of the oligosaccharide to the alpha-1,6 position. This is 1,4-alpha-glucan branching enzyme GlgB from Streptococcus mutans serotype c (strain ATCC 700610 / UA159).